Reading from the N-terminus, the 96-residue chain is MYFHSTAIILFLNKIDLFEIKITHTNITVAFPDYEGPRERDCALEYIRVQFISLNNNKNRKIYQHVTSATDTARIQVVIDMLFDIIISASLKMVGV.

A G-alpha domain is found at 2–96; sequence YFHSTAIILF…ISASLKMVGV (95 aa). A G1 motif region spans residues 9 to 16; the sequence is ILFLNKID. GTP is bound by residues 13-16 and A69; that span reads NKID. Residues 67 to 72 are G2 motif; the sequence is TSATDT.

The protein belongs to the G-alpha family. In terms of assembly, g proteins are composed of 3 units; alpha, beta and gamma. The alpha chain contains the guanine nucleotide binding site. As to expression, expressed in ASJ neurons.

Functionally, guanine nucleotide-binding proteins (G proteins) are involved as modulators or transducers in various transmembrane signaling systems. Plays a role in innate immunity and maintaining survival in response to metabolites of E.coli. This might be by regulating the expression and signaling of genes such as lys-8, ins-7 and daf-28. Has a role in lifespan to promote longevity. This is Guanine nucleotide-binding protein alpha-9 subunit from Caenorhabditis elegans.